The following is a 1056-amino-acid chain: Carbamoyl phosphate synthase large chain (1056 aa).

Residues 1–399 (MKIDVSKVIV…AFQKAIRMLD (399 aa)) form a carboxyphosphate synthetic domain region. ATP is bound by residues arginine 127, arginine 167, glycine 173, glycine 174, lysine 206, leucine 208, glutamate 213, glycine 239, valine 240, histidine 241, glutamine 282, and glutamate 296. The ATP-grasp 1 domain maps to 131–325 (QKTMKKVGLP…LAYIATKLAI (195 aa)). Mg(2+) contacts are provided by glutamine 282, glutamate 296, and asparagine 298. Mn(2+) contacts are provided by glutamine 282, glutamate 296, and asparagine 298. The segment at 400–536 (IGDELIGKYY…VTYDGVENDI (137 aa)) is oligomerization domain. Positions 537 to 919 (PKPKKPSILV…LKSWLSVKPN (383 aa)) are carbamoyl phosphate synthetic domain. Residues 661–849 (SKLLEKLGIP…LMELSAQAVL (189 aa)) enclose the ATP-grasp 2 domain. ATP contacts are provided by arginine 697, lysine 736, isoleucine 738, glutamate 742, glycine 766, valine 767, histidine 768, serine 769, glutamine 809, and glutamate 820. Positions 809, 820, and 822 each coordinate Mg(2+). Mn(2+) is bound by residues glutamine 809, glutamate 820, and asparagine 822. Residues 915–1043 (SVKPNELPKT…REYWIRKIEE (129 aa)) form the MGS-like domain. Residues 920 to 1056 (ELPKTSALIY…EYAASVVLRR (137 aa)) are allosteric domain.

It belongs to the CarB family. Composed of two chains; the small (or glutamine) chain promotes the hydrolysis of glutamine to ammonia, which is used by the large (or ammonia) chain to synthesize carbamoyl phosphate. Tetramer of heterodimers (alpha,beta)4. Mg(2+) is required as a cofactor. The cofactor is Mn(2+).

The catalysed reaction is hydrogencarbonate + L-glutamine + 2 ATP + H2O = carbamoyl phosphate + L-glutamate + 2 ADP + phosphate + 2 H(+). It catalyses the reaction hydrogencarbonate + NH4(+) + 2 ATP = carbamoyl phosphate + 2 ADP + phosphate + 2 H(+). Its pathway is amino-acid biosynthesis; L-arginine biosynthesis; carbamoyl phosphate from bicarbonate: step 1/1. It functions in the pathway pyrimidine metabolism; UMP biosynthesis via de novo pathway; (S)-dihydroorotate from bicarbonate: step 1/3. Its function is as follows. Large subunit of the glutamine-dependent carbamoyl phosphate synthetase (CPSase). CPSase catalyzes the formation of carbamoyl phosphate from the ammonia moiety of glutamine, carbonate, and phosphate donated by ATP, constituting the first step of 2 biosynthetic pathways, one leading to arginine and/or urea and the other to pyrimidine nucleotides. The large subunit (synthetase) binds the substrates ammonia (free or transferred from glutamine from the small subunit), hydrogencarbonate and ATP and carries out an ATP-coupled ligase reaction, activating hydrogencarbonate by forming carboxy phosphate which reacts with ammonia to form carbamoyl phosphate. In Pyrococcus furiosus (strain ATCC 43587 / DSM 3638 / JCM 8422 / Vc1), this protein is Carbamoyl phosphate synthase large chain.